Consider the following 526-residue polypeptide: ATP synthase subunit alpha (526 aa).

171 to 178 (GDRQTGKT) contacts ATP.

It belongs to the ATPase alpha/beta chains family. In terms of assembly, F-type ATPases have 2 components, CF(1) - the catalytic core - and CF(0) - the membrane proton channel. CF(1) has five subunits: alpha(3), beta(3), gamma(1), delta(1), epsilon(1). CF(0) has four main subunits: a(1), b(1), b'(1) and c(9-12).

The protein resides in the cell inner membrane. The enzyme catalyses ATP + H2O + 4 H(+)(in) = ADP + phosphate + 5 H(+)(out). Produces ATP from ADP in the presence of a proton gradient across the membrane. The alpha chain is a regulatory subunit. The protein is ATP synthase subunit alpha of Chlorobaculum tepidum (strain ATCC 49652 / DSM 12025 / NBRC 103806 / TLS) (Chlorobium tepidum).